The following is a 175-amino-acid chain: Large ribosomal subunit protein uL18 (175 aa).

The protein belongs to the universal ribosomal protein uL18 family. Part of the 50S ribosomal subunit. Contacts the 5S and 23S rRNAs.

This is one of the proteins that bind and probably mediate the attachment of the 5S RNA into the large ribosomal subunit, where it forms part of the central protuberance. This is Large ribosomal subunit protein uL18 from Methanosphaerula palustris (strain ATCC BAA-1556 / DSM 19958 / E1-9c).